The chain runs to 413 residues: Elongation factor 1-alpha (413 aa).

One can recognise a tr-type G domain in the interval 5 to 211 (KEHINLAFIG…DNLAAPEKPV (207 aa)). The G1 stretch occupies residues 14–21 (GHVDHGKS). Position 14 to 21 (14 to 21 (GHVDHGKS)) interacts with GTP. Ser-21 provides a ligand contact to Mg(2+). The interval 60–64 (GVTID) is G2. The segment at 81 to 84 (DCPG) is G3. GTP is bound by residues 81-85 (DCPGH) and 136-139 (NKID). Positions 136–139 (NKID) are G4. The tract at residues 175–177 (SAF) is G5.

It belongs to the TRAFAC class translation factor GTPase superfamily. Classic translation factor GTPase family. EF-Tu/EF-1A subfamily.

The protein resides in the cytoplasm. It catalyses the reaction GTP + H2O = GDP + phosphate + H(+). Its function is as follows. GTP hydrolase that promotes the GTP-dependent binding of aminoacyl-tRNA to the A-site of ribosomes during protein biosynthesis. This chain is Elongation factor 1-alpha, found in Methanobrevibacter smithii (strain ATCC 35061 / DSM 861 / OCM 144 / PS).